The primary structure comprises 174 residues: UPF0340 protein SAB1998c (174 aa).

Belongs to the UPF0340 family.

This chain is UPF0340 protein SAB1998c, found in Staphylococcus aureus (strain bovine RF122 / ET3-1).